Reading from the N-terminus, the 434-residue chain is Protein trichome birefringence-like 3 (434 aa).

The chain crosses the membrane as a helical; Signal-anchor for type II membrane protein span at residues I15–T35. A GDS motif motif is present at residues G166–S168. A DCXHWCLPGXXDXWN motif motif is present at residues D413–N427.

The protein belongs to the PC-esterase family. TBL subfamily.

It is found in the golgi apparatus membrane. Functionally, involved in secondary cell wall cellulose deposition. Required for normal stem development. May act as a bridging protein that binds pectin and other cell wall polysaccharides. Probably involved in maintaining esterification of pectins. May be involved in the specific O-acetylation of cell wall polymers. The protein is Protein trichome birefringence-like 3 (TBL3) of Arabidopsis thaliana (Mouse-ear cress).